Reading from the N-terminus, the 160-residue chain is Transcription elongation factor GreA (160 aa).

Residues 3 to 84 adopt a coiled-coil conformation; sequence SIVNDKILLT…SKAKIIKADL (82 aa).

The protein belongs to the GreA/GreB family.

Its function is as follows. Necessary for efficient RNA polymerase transcription elongation past template-encoded arresting sites. The arresting sites in DNA have the property of trapping a certain fraction of elongating RNA polymerases that pass through, resulting in locked ternary complexes. Cleavage of the nascent transcript by cleavage factors such as GreA or GreB allows the resumption of elongation from the new 3'terminus. GreA releases sequences of 2 to 3 nucleotides. This chain is Transcription elongation factor GreA, found in Mesomycoplasma hyopneumoniae (strain 7448) (Mycoplasma hyopneumoniae).